The chain runs to 96 residues: Protein transport protein Sec61 subunit beta (96 aa).

A compositionally biased stretch (polar residues) spans 1–17 (MPGPTPSGTNVGSSGRS). The segment at 1-54 (MPGPTPSGTNVGSSGRSPSKAVAARAAGSTVRQRKNASCGTRSAGRTTSAGTGG) is disordered. Proline 2 carries the post-translational modification N-acetylproline. Residues 2 to 70 (PGPTPSGTNV…EDSPGLKVGP (69 aa)) lie on the Cytoplasmic side of the membrane. Residue serine 7 is modified to Phosphoserine. Threonine 9 bears the Phosphothreonine mark. Phosphoserine occurs at positions 13, 14, and 17. A lipid anchor (S-palmitoyl cysteine) is attached at cysteine 39. A compositionally biased stretch (low complexity) spans 40 to 50 (GTRSAGRTTSA). A helical transmembrane segment spans residues 71 to 91 (VPVLVMSLLFIAAVFMLHIWG).

It belongs to the SEC61-beta family. The SEC61 channel-forming translocon complex consists of channel-forming core components SEC61A1, SEC61B and SEC61G and different auxiliary components such as SEC62 and SEC63. The SEC61 channel associates with the multi-pass translocon (MPT) complex. Interacts with TRAM1.

The protein localises to the endoplasmic reticulum membrane. Its function is as follows. Component of SEC61 channel-forming translocon complex that mediates transport of signal peptide-containing precursor polypeptides across the endoplasmic reticulum (ER). Forms a ribosome receptor and a gated pore in the ER membrane, both functions required for cotranslational translocation of nascent polypeptides. The SEC61 channel is also involved in ER membrane insertion of transmembrane proteins: it mediates membrane insertion of the first few transmembrane segments of proteins, while insertion of subsequent transmembrane regions of multi-pass membrane proteins is mediated by the multi-pass translocon (MPT) complex. The SEC61 channel cooperates with the translocating protein TRAM1 to import nascent proteins into the ER. Required for PKD1/Polycystin-1 biogenesis. The sequence is that of Protein transport protein Sec61 subunit beta from Mus musculus (Mouse).